Consider the following 371-residue polypeptide: Flagellar P-ring protein (371 aa).

The signal sequence occupies residues 1–25; the sequence is MTMRVCKWLLTFALLFAATLTPAHS.

The protein belongs to the FlgI family. As to quaternary structure, the basal body constitutes a major portion of the flagellar organelle and consists of four rings (L,P,S, and M) mounted on a central rod.

It is found in the periplasm. The protein resides in the bacterial flagellum basal body. Assembles around the rod to form the L-ring and probably protects the motor/basal body from shearing forces during rotation. In Sinorhizobium fredii (strain NBRC 101917 / NGR234), this protein is Flagellar P-ring protein.